The sequence spans 608 residues: Protein FAM151A (608 aa).

A helical membrane pass occupies residues 14-34; that stretch reads WILAGSVTVTLVLAISLILGL. Residues 586–596 show a composition bias toward polar residues; that stretch reads VSSNRPSSRIG. Residues 586-608 form a disordered region; sequence VSSNRPSSRIGPSSVEGFPGESR.

This sequence belongs to the menorin family.

It localises to the membrane. The protein is Protein FAM151A (Fam151a) of Mus musculus (Mouse).